The chain runs to 1047 residues: Ubiquitin carboxyl-terminal hydrolase 28 (1047 aa).

2 disordered regions span residues 60-95 and 110-138; these read DQEP…DPEK and SPKA…RCEV. The region spanning 94–113 is the UIM domain; the sequence is EKKGDVHSAVAYGQLESPKA. Positions 111-128 are enriched in basic and acidic residues; sequence PKAHAAERPQEVHSPEHK. One can recognise a USP domain in the interval 156 to 651; it reads VGMKNIGNTC…SAYCLMYISD (496 aa). Cys165 serves as the catalytic Nucleophile. A compositionally biased stretch (polar residues) spans 461-486; the sequence is STEDSQMMDRQSQGESLILGTPSQPD. The interval 461-528 is disordered; it reads STEDSQMMDR…SEPPAEMSDC (68 aa). Residues 489–498 are compositionally biased toward basic and acidic residues; the sequence is LDGKDGKPED. Polar residues predominate over residues 504 to 516; sequence ANSSPQQQLNAPL. The active-site Proton acceptor is the His601. Positions 694-735 are disordered; that stretch reads EAEEWEEEQSCKIPSTASESQELSPESGLDPPAAHEQSLRSL. Positions 705–717 are enriched in polar residues; the sequence is KIPSTASESQELS.

This sequence belongs to the peptidase C19 family. USP28 subfamily.

It localises to the nucleus. The protein localises to the nucleoplasm. The enzyme catalyses Thiol-dependent hydrolysis of ester, thioester, amide, peptide and isopeptide bonds formed by the C-terminal Gly of ubiquitin (a 76-residue protein attached to proteins as an intracellular targeting signal).. Functionally, deubiquitinase involved in DNA damage response checkpoint and MYC proto-oncogene stability. Involved in DNA damage induced apoptosis by specifically deubiquitinating proteins of the DNA damage pathway such as CLSPN. Also involved in G2 DNA damage checkpoint, by deubiquitinating CLSPN, and preventing its degradation by the anaphase promoting complex/cyclosome (APC/C). Specifically deubiquitinates MYC in the nucleoplasm, leading to prevent MYC degradation by the proteasome. Deubiquitinates ZNF304, hence may prevent ZNF304 degradation by the proteasome, leading to the activated KRAS-mediated promoter hypermethylation and transcriptional silencing of tumor suppressor genes (TSGs). This chain is Ubiquitin carboxyl-terminal hydrolase 28 (USP28), found in Gallus gallus (Chicken).